Reading from the N-terminus, the 65-residue chain is Large ribosomal subunit protein bL35 (65 aa).

It belongs to the bacterial ribosomal protein bL35 family.

The protein is Large ribosomal subunit protein bL35 of Caldicellulosiruptor saccharolyticus (strain ATCC 43494 / DSM 8903 / Tp8T 6331).